We begin with the raw amino-acid sequence, 133 residues long: Ribonucleases P/MRP protein subunit POP8 (133 aa).

In terms of assembly, component of nuclear RNase P and RNase MRP complexes. RNase P consists of an RNA moiety and at least 9 protein subunits including POP1, POP3, POP4, POP5, POP6, POP7, POP8, RPP1 and RPR2. RNase MRP complex consists of an RNA moiety and at least 10 protein subunits including POP1, POP3, POP4, POP5, POP6, POP7, POP8, RMP1, RPP1 and SNM1, many of which are shared with the RNase P complex.

Its subcellular location is the nucleus. It carries out the reaction Endonucleolytic cleavage of RNA, removing 5'-extranucleotides from tRNA precursor.. Functionally, component of ribonuclease P, a protein complex that generates mature tRNA molecules by cleaving their 5'-ends. Also a component of RNase MRP, which cleaves pre-rRNA sequences. This is Ribonucleases P/MRP protein subunit POP8 (POP8) from Saccharomyces cerevisiae (strain ATCC 204508 / S288c) (Baker's yeast).